Here is a 177-residue protein sequence, read N- to C-terminus: Phycocyanin-645 beta chain (177 aa).

Y18 serves as a coordination point for mesobiliverdin. (2R,3E)-phycocyanobilin-binding residues include K28, N35, and D39. 15,16-dihydrobiliverdin-binding residues include C50, D54, and C61. 4 residues coordinate (2R,3E)-phycocyanobilin: R77, C82, R84, and D85. Q148 contacts 15,16-dihydrobiliverdin. 3 residues coordinate (2R,3E)-phycocyanobilin: P154, G156, and C158.

Belongs to the phycobiliprotein family. Heterotetramer of 2 different alpha chains and 2 identical beta chains which form 2 alpha-beta heterodimers within the heterotetramer. In terms of processing, contains two phycocyanobilin chromophores, one mesobiliverdin chromophore and one 15,16-dihydrobiliverdin chromophore with binding mediated by both the alpha and beta subunits.

The protein resides in the plastid. Its subcellular location is the chloroplast thylakoid membrane. Light-harvesting photosynthetic tetrapyrrole chromophore-protein from the phycobiliprotein complex. The chain is Phycocyanin-645 beta chain from Chroomonas sp.